The chain runs to 331 residues: Glycerol-3-phosphate dehydrogenase [NAD(P)+] (331 aa).

4 residues coordinate NADPH: serine 11, phenylalanine 12, arginine 32, and lysine 106. Sn-glycerol 3-phosphate is bound by residues lysine 106, glycine 134, and serine 136. Position 138 (alanine 138) interacts with NADPH. Sn-glycerol 3-phosphate-binding residues include lysine 189, aspartate 242, serine 252, arginine 253, and asparagine 254. The active-site Proton acceptor is lysine 189. Arginine 253 is an NADPH binding site. NADPH is bound by residues valine 277 and glutamate 279.

The protein belongs to the NAD-dependent glycerol-3-phosphate dehydrogenase family.

The protein localises to the cytoplasm. It carries out the reaction sn-glycerol 3-phosphate + NAD(+) = dihydroxyacetone phosphate + NADH + H(+). It catalyses the reaction sn-glycerol 3-phosphate + NADP(+) = dihydroxyacetone phosphate + NADPH + H(+). It participates in membrane lipid metabolism; glycerophospholipid metabolism. Its function is as follows. Catalyzes the reduction of the glycolytic intermediate dihydroxyacetone phosphate (DHAP) to sn-glycerol 3-phosphate (G3P), the key precursor for phospholipid synthesis. The protein is Glycerol-3-phosphate dehydrogenase [NAD(P)+] of Clostridium perfringens (strain SM101 / Type A).